Here is a 301-residue protein sequence, read N- to C-terminus: Hydroxymycolate synthase MmaA4 (301 aa).

S-adenosyl-L-methionine contacts are provided by residues 42–43 (YS), 81–83 (GCG), 103–108 (TLSKNQ), 132–133 (WE), and I145. Residue C278 is part of the active site.

This sequence belongs to the CFA/CMAS family. As to quaternary structure, monomer.

It functions in the pathway lipid metabolism; mycolic acid biosynthesis. With respect to regulation, inhibited by S-adenosyl-N-decyl-aminoethyl (SADAE). Functionally, involved in the biosynthesis of hydroxymycolate, a common precursor of oxygenated mycolic acids (methoxy-mycolate and keto-mycolate). Probably transfers a methyl group from the S-adenosylmethionine (SAM) cofactor and, subsequently or simultaneously, a water molecule onto the double bound of ethylene substrates, leading to the formation of the hydroxylated product at the distal position. Involved in the activation of the antitubercular drug thiacetazone (TAC). The protein is Hydroxymycolate synthase MmaA4 (mmaA4) of Mycobacterium tuberculosis (strain ATCC 25618 / H37Rv).